The following is a 61-amino-acid chain: Alpha-conotoxin-like Tx1.2 (61 aa).

The signal sequence occupies residues 1–20 (MFTVFLLVVLATTVVSFTSG). Positions 21–42 (RSTFRGRNAAAKASGLVSLTDR) are excised as a propeptide. Residues Pro-44 and Pro-50 each carry the 4-hydroxyproline modification. 2 disulfides stabilise this stretch: Cys-46–Cys-52 and Cys-47–Cys-60. Residues 48–50 (SHP) are ser-Xaa-Pro motif, crucial for potent interaction with nAChR.

The protein belongs to the conotoxin A superfamily. In terms of tissue distribution, expressed by the venom duct.

The protein localises to the secreted. Functionally, alpha-conotoxins act on postsynaptic membranes, they bind to the nicotinic acetylcholine receptors (nAChR) and thus inhibit them. This toxin also inhibits high voltage-activated (HVA) calcium channel currents in rat DRG neurons (8% inhibition at 1 uM toxin) probably by activating GABA(B) receptors (GABBR1 and/or GABBR2). This Conus textile (Cloth-of-gold cone) protein is Alpha-conotoxin-like Tx1.2.